An 84-amino-acid polypeptide reads, in one-letter code: DNA-directed RNA polymerase subunit Rpo5 (84 aa).

Belongs to the archaeal Rpo5/eukaryotic RPB5 RNA polymerase subunit family. As to quaternary structure, part of the RNA polymerase complex.

The protein resides in the cytoplasm. It catalyses the reaction RNA(n) + a ribonucleoside 5'-triphosphate = RNA(n+1) + diphosphate. Its function is as follows. DNA-dependent RNA polymerase (RNAP) catalyzes the transcription of DNA into RNA using the four ribonucleoside triphosphates as substrates. In Sulfurisphaera tokodaii (strain DSM 16993 / JCM 10545 / NBRC 100140 / 7) (Sulfolobus tokodaii), this protein is DNA-directed RNA polymerase subunit Rpo5.